Consider the following 142-residue polypeptide: Deoxyuridine 5'-triphosphate nucleotidohydrolase (142 aa).

Residues 62–64, Asn75, 79–81, and Lys89 contribute to the substrate site; these read RSG and TID.

The protein belongs to the dUTPase family. Mg(2+) serves as cofactor.

It catalyses the reaction dUTP + H2O = dUMP + diphosphate + H(+). Its pathway is pyrimidine metabolism; dUMP biosynthesis; dUMP from dCTP (dUTP route): step 2/2. In terms of biological role, this enzyme is involved in nucleotide metabolism: it produces dUMP, the immediate precursor of thymidine nucleotides and it decreases the intracellular concentration of dUTP so that uracil cannot be incorporated into DNA. In Nautilia profundicola (strain ATCC BAA-1463 / DSM 18972 / AmH), this protein is Deoxyuridine 5'-triphosphate nucleotidohydrolase.